A 164-amino-acid polypeptide reads, in one-letter code: MEALGINPTLFIAQLINFLLLIFILRALLYRPVMNLLNERTRRIEESVRDAEKVREQLANARRDYEAEIARARQEAAKIVAQAQERAKQQEAEIIAQARREAERLKEEARAQAEQERIRMLSEAKSQIADLVTLTASRVLGAELQARGHDALIAESLAALDRRN.

The chain crosses the membrane as a helical span at residues Leu4–Ile24.

Belongs to the ATPase B chain family. In terms of assembly, F-type ATPases have 2 components, F(1) - the catalytic core - and F(0) - the membrane proton channel. F(1) has five subunits: alpha(3), beta(3), gamma(1), delta(1), epsilon(1). F(0) has four main subunits: a(1), b(2) and c(10-14). The alpha and beta chains form an alternating ring which encloses part of the gamma chain. F(1) is attached to F(0) by a central stalk formed by the gamma and epsilon chains, while a peripheral stalk is formed by the delta and b chains.

It is found in the cell membrane. F(1)F(0) ATP synthase produces ATP from ADP in the presence of a proton or sodium gradient. F-type ATPases consist of two structural domains, F(1) containing the extramembraneous catalytic core and F(0) containing the membrane proton channel, linked together by a central stalk and a peripheral stalk. During catalysis, ATP synthesis in the catalytic domain of F(1) is coupled via a rotary mechanism of the central stalk subunits to proton translocation. In terms of biological role, component of the F(0) channel, it forms part of the peripheral stalk, linking F(1) to F(0). The polypeptide is ATP synthase subunit b (Chloroflexus aurantiacus (strain ATCC 29366 / DSM 635 / J-10-fl)).